A 243-amino-acid chain; its full sequence is E3 ubiquitin-protein ligase RMA3 (243 aa).

The RING-type zinc finger occupies 44–92 (CNICLDTAHDPVVTLCGHLFCWPCIYKWLHVQLSSVSVDQHQNNCPVCK). The tract at residues 110–135 (SPSSTFGSKKQDALSTDIPRRPAPSA) is disordered. The chain crosses the membrane as a helical; Anchor for type IV membrane protein span at residues 223–243 (KSLNRVSIFFLCCIILCLLLF).

In terms of tissue distribution, ubiquitous. Highly expressed in roots.

It localises to the endoplasmic reticulum membrane. It catalyses the reaction S-ubiquitinyl-[E2 ubiquitin-conjugating enzyme]-L-cysteine + [acceptor protein]-L-lysine = [E2 ubiquitin-conjugating enzyme]-L-cysteine + N(6)-ubiquitinyl-[acceptor protein]-L-lysine.. It functions in the pathway protein modification; protein ubiquitination. Its function is as follows. E3 ubiquitin-protein ligase. The sequence is that of E3 ubiquitin-protein ligase RMA3 (RMA3) from Arabidopsis thaliana (Mouse-ear cress).